A 633-amino-acid chain; its full sequence is Protein CASP (633 aa).

The Cytoplasmic portion of the chain corresponds to methionine 1 to leucine 601. Residues glutamine 39–proline 60 are disordered. 2 coiled-coil regions span residues isoleucine 111–lysine 339 and serine 369–glutamate 433. A helical; Anchor for type IV membrane protein transmembrane segment spans residues phenylalanine 602 to isoleucine 622. At alanine 623–tyrosine 633 the chain is on the lumenal side.

This sequence belongs to the CASP family.

It is found in the golgi apparatus membrane. In terms of biological role, may be involved in intra-Golgi transport. This Schizosaccharomyces pombe (strain 972 / ATCC 24843) (Fission yeast) protein is Protein CASP (coy1).